The following is a 293-amino-acid chain: AKT-interacting protein (293 aa).

The segment covering 1–11 has biased composition (polar residues); it reads MNPFWSMSTNA. The tract at residues 1-44 is disordered; it reads MNPFWSMSTNAGRKRSDGEEQSGSGEQRASPARPPFGKKQLPSI. The region spanning 75-223 is the UBC core domain; it reads YLEYSLLAEF…VVDSVKLCNS (149 aa). The tract at residues 260–293 is disordered; it reads RPEDFNKGLPVSGLSWVKPGSTQPFSKEDNPLQT.

Belongs to the ubiquitin-conjugating enzyme family. FTS subfamily.

Its subcellular location is the cytoplasm. The protein localises to the cell membrane. Its function is as follows. May function to promote vesicle trafficking and/or fusion. May also regulate apoptosis. The protein is AKT-interacting protein (aktip) of Danio rerio (Zebrafish).